A 386-amino-acid polypeptide reads, in one-letter code: Succinate--CoA ligase [ADP-forming] subunit beta (386 aa).

In terms of domain architecture, ATP-grasp spans 9-244 (KEILHKFNVP…YDEEVKEEIE (236 aa)). Residues Lys46, 53–55 (GRG), Glu99, Ser102, and Glu107 contribute to the ATP site. Asn199 and Asp213 together coordinate Mg(2+). Residues Asn264 and 321-323 (GIM) each bind substrate.

It belongs to the succinate/malate CoA ligase beta subunit family. Heterotetramer of two alpha and two beta subunits. Mg(2+) is required as a cofactor.

The enzyme catalyses succinate + ATP + CoA = succinyl-CoA + ADP + phosphate. The catalysed reaction is GTP + succinate + CoA = succinyl-CoA + GDP + phosphate. The protein operates within carbohydrate metabolism; tricarboxylic acid cycle; succinate from succinyl-CoA (ligase route): step 1/1. Functionally, succinyl-CoA synthetase functions in the citric acid cycle (TCA), coupling the hydrolysis of succinyl-CoA to the synthesis of either ATP or GTP and thus represents the only step of substrate-level phosphorylation in the TCA. The beta subunit provides nucleotide specificity of the enzyme and binds the substrate succinate, while the binding sites for coenzyme A and phosphate are found in the alpha subunit. The chain is Succinate--CoA ligase [ADP-forming] subunit beta from Wolbachia sp. subsp. Brugia malayi (strain TRS).